We begin with the raw amino-acid sequence, 58 residues long: Conotoxin TxXIIIA (58 aa).

An N-terminal signal peptide occupies residues 1–22 (MRCLPVFVILLLLIASVPSVDA). A propeptide spanning residues 23–46 (ELKAKDDMPQASFHDNAERDQQKK) is cleaved from the precursor.

Homodimer; disulfide-linked. Post-translationally, 5 disulfide bonds are present in each homodimer: two intrachain disulfide bonds per subunit, and one interchain disulfide bond linking the two subunits. Expressed by the venom duct.

The protein resides in the secreted. This chain is Conotoxin TxXIIIA, found in Conus textile (Cloth-of-gold cone).